The following is a 617-amino-acid chain: Pentatricopeptide repeat-containing protein At4g18520, chloroplastic (617 aa).

Residues 1-19 constitute a chloroplast transit peptide; the sequence is MFSLSLIQPRLRISEIPVT. PPR repeat units follow at residues 116 to 146, 147 to 181, 183 to 217, 222 to 247, 248 to 282, 283 to 317, 318 to 348, 349 to 383, 384 to 418, 419 to 449, 450 to 484, 485 to 519, 520 to 550, and 551 to 585; these read VIYF…MPEK, NTVT…GIRF, NERM…GVGN, SSLV…MEEK, DVIS…WFLP, NEFT…MIKT, DVFV…MSNR, NTVT…HLIA, NNLT…SIEK, NVYI…LPSR, DVVS…GVEP, NPFT…HALS, NVFV…MPEK, and NLVS…GFEV.

It belongs to the PPR family. PCMP-A subfamily. As to quaternary structure, interacts with MORF8/RIP1, MORF2/RIP2 and MORF9/RIP9. In terms of tissue distribution, expressed specifically in aerial greening tissues, such as cotyledons, rosette leaves, cauline leaves, stems, sepals, stamens, carpels and siliques.

It localises to the plastid. Its subcellular location is the chloroplast. Its function is as follows. Required for proper chloroplast development. Involved in the regulation of plastid gene expression probably through regulation of plastid-encoded polymerase (PEP) dependent chloroplast transcription. Required for RNA editing of several chloroplastic transcripts, especially accD transcripts. Required for processing of the chloroplastic rpoA pre-mRNA. Required for the monocistronic rpoA transcript processing from the rpl23-rpl2-rps19-rpl22-rps3-rpl16-rpl14-rps8-rpl36-rps11-rpoA polycistron. Binds the intergenic sequence of rps11-rpoA for rpoA monocistronic RNA cleavage. This Arabidopsis thaliana (Mouse-ear cress) protein is Pentatricopeptide repeat-containing protein At4g18520, chloroplastic (PCMP-A2).